The sequence spans 650 residues: PTS system mannose-specific EIIBCA component (650 aa).

One can recognise a PTS EIIB type-2 domain in the interval 1–98 (MKLLAITSCP…PEELIQKALN (98 aa)). Cysteine 9 serves as the catalytic Phosphocysteine intermediate; for EIIB activity. The 334-residue stretch at 123 to 456 (IYRHLMNGVS…SLVTALFVNV (334 aa)) folds into the PTS EIIC type-2 domain. 7 helical membrane-spanning segments follow: residues 133–153 (FMVPFIVVGGLLIAVALTLGG), 174–194 (IGSASFSFMIPILAGYIAYSI), 199–219 (GLVPGMIGGYIAATGSFYDSA), 221–241 (GAGFLGGIIAGFLAGYAALWI), 256–276 (IIIIPVFASLIVGLAFVFLIG), 297–317 (SSILLALILGAMISFDMGGPV), and 336–356 (IMGPIAVAICIPPIGLGIATF). Position 365 is a phosphoserine (serine 365). The next 3 helical transmembrane spans lie at 369–389 (MGKAAFTMGLFGITEGAIPFA), 396–416 (VIPSIMAGSMTGSVIAMIGNV), and 436–456 (VLMFFIAVIAGSLVTALFVNV). The PTS EIIA type-2 domain maps to 504–649 (DIISPELIEP…EEAYKLLEEI (146 aa)). Histidine 566 serves as the catalytic Tele-phosphohistidine intermediate; for EIIA activity.

The protein localises to the cell membrane. The enzyme catalyses D-mannose(out) + N(pros)-phospho-L-histidyl-[protein] = D-mannose 6-phosphate(in) + L-histidyl-[protein]. Functionally, the phosphoenolpyruvate-dependent sugar phosphotransferase system (sugar PTS), a major carbohydrate active -transport system, catalyzes the phosphorylation of incoming sugar substrates concomitantly with their translocation across the cell membrane. This system is involved in mannose transport. This is PTS system mannose-specific EIIBCA component (manP) from Bacillus subtilis (strain 168).